Consider the following 516-residue polypeptide: uncharacterized protein (516 aa).

Positions 31–185 (ACIFLSKFDM…LDKFDIFEKF (155 aa)) constitute a uDENN domain. The region spanning 211–365 (HLVEYLPYWT…LEVYEKLILG (155 aa)) is the cDENN domain. In terms of domain architecture, dDENN spans 367–513 (LQEDASTNAT…DISNLPECLG (147 aa)). 2 S-palmitoyl cysteine lipidation sites follow: C511 and C516.

Palmitoylated by AKR1.

The protein localises to the lipid droplet. Functionally, may be involved in lipid metabolism. This is an uncharacterized protein from Saccharomyces cerevisiae (strain ATCC 204508 / S288c) (Baker's yeast).